The sequence spans 303 residues: Phosphoglycerate mutase 3 (303 aa).

Substrate contacts are provided by residues 13 to 20 (RHGQSELN), 26 to 27 (CG), arginine 70, 120 to 123 (ERHY), lysine 131, and 147 to 148 (RR). Histidine 14 acts as the Tele-phosphohistidine intermediate in catalysis. Glutamate 120 acts as the Proton donor/acceptor in catalysis. The interval 168 to 198 (NDQGSSTGYDFKEPNRHLKYGPEEKANERLP) is disordered. Residues 177-198 (DFKEPNRHLKYGPEEKANERLP) show a composition bias toward basic and acidic residues. Substrate is bound at residue 236-237 (GS).

The protein belongs to the phosphoglycerate mutase family. BPG-dependent PGAM subfamily.

The enzyme catalyses (2R)-2-phosphoglycerate = (2R)-3-phosphoglycerate. Its pathway is carbohydrate degradation; glycolysis; pyruvate from D-glyceraldehyde 3-phosphate: step 3/5. Functionally, could be non-functional. The chain is Phosphoglycerate mutase 3 (GPM3) from Saccharomyces cerevisiae (strain ATCC 204508 / S288c) (Baker's yeast).